The sequence spans 730 residues: PWWP domain-containing protein 2A (730 aa).

Positions M1–P15 are enriched in low complexity. A disordered region spans residues M1–S134. A compositionally biased stretch (pro residues) spans P66–G77. Residues S82 and S99 each carry the phosphoserine modification. A compositionally biased stretch (pro residues) spans P91–P108. The segment at G128 to G346 is interaction with HDAC1 and MTA1. A Glycyl lysine isopeptide (Lys-Gly) (interchain with G-Cter in SUMO2) cross-link involves residue K188. Disordered stretches follow at residues Y257–M276, I311–R355, and K409–K531. Residues R267–M276 show a composition bias toward basic residues. 2 stretches are compositionally biased toward basic and acidic residues: residues I311–D329 and D341–R354. An interaction with the H2A.Z/H2AZ1 region spans residues M396–T547. Low complexity predominate over residues S488–E501. Over residues D512–M527 the composition is skewed to basic and acidic residues. The PWWP domain maps to V630 to N690.

In terms of assembly, component of a MTA1-specific subcomplex of the NuRD complex (M1HR), which is composed of PWWP2A, MTA1/2, HDAC1/2, and RBBP4/7 but does not contain CHD4 and MBD3. Interacts with MTA1; the interaction mediates the association of PWWP2A with the M1HR complex. Interacts with H2A.Z/H2AZ1. Interacts (via PWWP domain) with histone H3 trimethylated at 'Lys-36' (H3K36me3). Does not interact with CHD4 and MBD3.

Its subcellular location is the nucleus. Functionally, chromatin-binding protein that acts as an adapter between distinct nucleosome components (H3K36me3 or H2A.Z) and chromatin-modifying complexes, contributing to the regulation of the levels of histone acetylation at actively transcribed genes. Competes with CHD4 and MBD3 for interaction with MTA1 to form a NuRD subcomplex, preventing the formation of full NuRD complex (containing CHD4 and MBD3), leading to recruitment of HDACs to gene promoters resulting in turn in the deacetylation of nearby H3K27 and H2A.Z. Plays a role in facilitating transcriptional elongation and repression of spurious transcription initiation through regulation of histone acetylation. Essential for proper mitosis progression. The sequence is that of PWWP domain-containing protein 2A (Pwwp2a) from Mus musculus (Mouse).